We begin with the raw amino-acid sequence, 378 residues long: RNA polymerase sigma factor SigA (378 aa).

The segment at 1–29 (MKNKTEVKNGGEKKNSKKVSKEESAKEKN) is disordered. The sigma-70 factor domain-2 stretch occupies residues 145–215 (LAEANLRLVV…TRAIADQART (71 aa)). Residues 169–172 (DLIQ) carry the Interaction with polymerase core subunit RpoC motif. The sigma-70 factor domain-3 stretch occupies residues 224 to 300 (ETINKLIRVS…DDEAPAPADA (77 aa)). Residues 313–366 (ILNTLTPREEKVLRLRFGLDDGRARTLEEVGKEFNVTRERIRQIEAKALRKLRH) form a sigma-70 factor domain-4 region. The segment at residues 339-358 (LEEVGKEFNVTRERIRQIEA) is a DNA-binding region (H-T-H motif).

The protein belongs to the sigma-70 factor family. RpoD/SigA subfamily. In terms of assembly, interacts transiently with the RNA polymerase catalytic core.

Its subcellular location is the cytoplasm. Functionally, sigma factors are initiation factors that promote the attachment of RNA polymerase to specific initiation sites and are then released. This sigma factor is the primary sigma factor during exponential growth. The sequence is that of RNA polymerase sigma factor SigA from Clostridium acetobutylicum (strain ATCC 824 / DSM 792 / JCM 1419 / IAM 19013 / LMG 5710 / NBRC 13948 / NRRL B-527 / VKM B-1787 / 2291 / W).